We begin with the raw amino-acid sequence, 2180 residues long: Genome polyprotein (2180 aa).

Disordered regions lie at residues 507 to 529 (DGADHTPKIPKRNVVLPSGAKDP), 624 to 679 (QPQK…YPIQ), 703 to 809 (KRAK…NTLP), and 822 to 848 (SEVEDEVDGMTEEPIPERRPEITPPKM). A coiled-coil region spans residues 573–624 (SKNQGLIRVLEQQLQDLNKRICPPGTSLFHFFDQQKSEMASLKEQIRLLKEQ). Polar residues-rich tracts occupy residues 631-643 (DTPSYQSSYQPFH) and 670-679 (PSLFSQYPIQ). Residues 703–716 (KRAKKKLQKDEVKQ) show a composition bias toward basic and acidic residues. Residues 759–771 (SEDTSSQSYISTE) are compositionally biased toward polar residues. Positions 784–807 (SEESTQLSQLSSSSNDSPENNENT) are enriched in low complexity. Positions 822–832 (SEVEDEVDGMT) are enriched in acidic residues. Residues 1113 to 1126 (CFTCGKIGHFSRNC) form a CCHC-type zinc finger. D1227 (for protease activity; shared with dimeric partner) is an active-site residue. 3 residues coordinate Mg(2+): D1480, D1543, and D1544. Disordered regions lie at residues 1824 to 1848 (RRTRSNSTKSKADSSQSTGSSYKLS), 2115 to 2145 (NIVKNSPRKRKGKAKSKSSTRNEKRRAKNKC), and 2161 to 2180 (YSTKPSTPSWTQDSSSEPCI). Residues 1828 to 1847 (SNSTKSKADSSQSTGSSYKL) show a composition bias toward polar residues. Basic residues predominate over residues 2120–2145 (SPRKRKGKAKSKSSTRNEKRRAKNKC). Residues 2163–2180 (TKPSTPSWTQDSSSEPCI) are compositionally biased toward polar residues.

The protein belongs to the Petuviruses genome polyprotein family.

It catalyses the reaction DNA(n) + a 2'-deoxyribonucleoside 5'-triphosphate = DNA(n+1) + diphosphate. Its function is as follows. Encodes presumably for at least four polypeptides: Movement protein (MP), capsid protein (CP), Protease (PR), and reverse transcriptase (RT). In Petunia (PVCV), this protein is Genome polyprotein.